The primary structure comprises 351 residues: N-terminal EF-hand calcium-binding protein 1 (351 aa).

Phosphoserine is present on Ser4. 2 consecutive EF-hand domains span residues Lys26–Ser61 and Leu60–Glu95. The Ca(2+) site is built by Asp39, Asn41, Asp43, Lys45, and Glu50. The stretch at Leu135–Gln163 forms a coiled coil. The disordered stretch occupies residues Gly180–Ser203. Positions His190–Val202 are enriched in polar residues. Residues Ser192 and Ser197 each carry the phosphoserine modification. Positions Glu209–Tyr275 form a coiled coil. The ABM domain maps to Met252–Met340.

In terms of assembly, interacts with STX1. May interact with CPNE6. As to expression, expressed in brain (at protein level).

Its subcellular location is the cytoplasm. In Homo sapiens (Human), this protein is N-terminal EF-hand calcium-binding protein 1 (NECAB1).